A 63-amino-acid polypeptide reads, in one-letter code: ORF6 protein (63 aa).

Belongs to the coronaviruses accessory protein 6 family.

Its subcellular location is the host endoplasmic reticulum membrane. The protein resides in the host Golgi apparatus membrane. Its function is as follows. Could be a determinant of virus virulence. Seems to stimulate cellular DNA synthesis in vitro. The polypeptide is ORF6 protein (Bat coronavirus HKU3 (BtCoV)).